A 207-amino-acid polypeptide reads, in one-letter code: Large ribosomal subunit protein uL4 (207 aa).

Residues 53-85 (ERSDVARTGKKFGRQKGGGTARHGDRKAPIFIG) are disordered.

It belongs to the universal ribosomal protein uL4 family. In terms of assembly, part of the 50S ribosomal subunit.

One of the primary rRNA binding proteins, this protein initially binds near the 5'-end of the 23S rRNA. It is important during the early stages of 50S assembly. It makes multiple contacts with different domains of the 23S rRNA in the assembled 50S subunit and ribosome. Its function is as follows. Forms part of the polypeptide exit tunnel. The protein is Large ribosomal subunit protein uL4 of Novosphingobium aromaticivorans (strain ATCC 700278 / DSM 12444 / CCUG 56034 / CIP 105152 / NBRC 16084 / F199).